Here is a 213-residue protein sequence, read N- to C-terminus: Large ribosomal subunit protein uL3 (213 aa).

This sequence belongs to the universal ribosomal protein uL3 family. In terms of assembly, part of the 50S ribosomal subunit. Forms a cluster with proteins L14 and L19.

In terms of biological role, one of the primary rRNA binding proteins, it binds directly near the 3'-end of the 23S rRNA, where it nucleates assembly of the 50S subunit. This Bifidobacterium longum (strain DJO10A) protein is Large ribosomal subunit protein uL3.